The chain runs to 552 residues: Chaperonin GroEL (552 aa).

Residues threonine 30–proline 33, lysine 51, aspartate 87–threonine 91, glycine 415, asparagine 480–alanine 482, and aspartate 496 each bind ATP.

This sequence belongs to the chaperonin (HSP60) family. In terms of assembly, forms a cylinder of 14 subunits composed of two heptameric rings stacked back-to-back. Interacts with the co-chaperonin GroES.

The protein localises to the cytoplasm. It carries out the reaction ATP + H2O + a folded polypeptide = ADP + phosphate + an unfolded polypeptide.. Functionally, together with its co-chaperonin GroES, plays an essential role in assisting protein folding. The GroEL-GroES system forms a nano-cage that allows encapsulation of the non-native substrate proteins and provides a physical environment optimized to promote and accelerate protein folding. The polypeptide is Chaperonin GroEL (Coxiella burnetii (strain RSA 493 / Nine Mile phase I)).